Reading from the N-terminus, the 232-residue chain is E3 ubiquitin-protein ligase RNF125 (232 aa).

A compositionally biased stretch (polar residues) spans methionine 1–glycine 10. The interval methionine 1–aspartate 27 is disordered. Glycine 2 carries N-myristoyl glycine lipidation. Zn(2+) contacts are provided by cysteine 37 and cysteine 40. The segment at cysteine 37–arginine 76 adopts an RING-type zinc-finger fold. The tract at residues valine 43–histidine 45 is interaction with the C2HC RNF-type zinc finger. Zn(2+) contacts are provided by cysteine 52, histidine 54, cysteine 57, cysteine 60, cysteine 72, cysteine 75, cysteine 100, and cysteine 103. The C2HC RNF-type zinc-finger motif lies at cysteine 100–cysteine 119. An interaction with the RING-type zinc finger region spans residues leucine 109–arginine 113. Positions 115 and 119 each coordinate Zn(2+). Residues glutamine 120 to proline 128 form a linker region region. The segment at glutamate 210 to glutamate 224 is required for interaction with ubiquitin and for autoubiquitination.

In terms of assembly, interacts with UBE2D1. Interacts with VCP/p97; leading to recruit RNF125 to RIGI and promote ubiquitination of RIGI. In terms of processing, autoubiquitinated, leading to its subsequent proteasomal degradation.

The protein localises to the golgi apparatus membrane. The catalysed reaction is S-ubiquitinyl-[E2 ubiquitin-conjugating enzyme]-L-cysteine + [acceptor protein]-L-lysine = [E2 ubiquitin-conjugating enzyme]-L-cysteine + N(6)-ubiquitinyl-[acceptor protein]-L-lysine.. The protein operates within protein modification; protein ubiquitination. E3 ubiquitin-protein ligase that mediates ubiquitination and subsequent proteasomal degradation of target proteins, such as RIGI, MAVS/IPS1, IFIH1/MDA5, JAK1 and p53/TP53. Acts as a negative regulator of type I interferon production by mediating ubiquitination of RIGI at 'Lys-181', leading to RIGI degradation. Mediates ubiquitination and subsequent degradation of p53/TP53. Mediates ubiquitination and subsequent degradation of JAK1. Acts as a positive regulator of T-cell activation. The polypeptide is E3 ubiquitin-protein ligase RNF125 (RNF125) (Macaca fascicularis (Crab-eating macaque)).